Consider the following 167-residue polypeptide: Envelope glycoprotein L (167 aa).

The N-terminal stretch at 1–20 (MGIFALFAVLWTTLLVTSHA) is a signal peptide. The tract at residues 18–131 (SHAYVALPCC…ADSSIHNVNI (114 aa)) is interaction with gH. Positions 142-154 (RTGSVSGSQTRAK) are enriched in polar residues. Residues 142–167 (RTGSVSGSQTRAKSSSRRAHAGQKGK) form a disordered region. The span at 155 to 167 (SSSRRAHAGQKGK) shows a compositional bias: basic residues.

This sequence belongs to the herpesviridae glycoprotein L family. In terms of assembly, interacts with glycoprotein H (gH); this interaction is necessary for the correct processing and cell surface expression of gH. The heterodimer gH/gL seems to interact with gB trimers during fusion. When in complex with gH, interacts with host EPHA2; this interaction triggers EPHA2 phosphorylation and endocytosis, allowing virus entry.

The protein localises to the virion membrane. The protein resides in the host cell membrane. Its subcellular location is the host Golgi apparatus. It localises to the host trans-Golgi network. In terms of biological role, the heterodimer glycoprotein H-glycoprotein L is required for the fusion of viral and plasma membranes leading to virus entry into the host cell. Acts as a functional inhibitor of gH and maintains gH in an inhibited form. Upon binding to host integrins, gL dissociates from gH leading to activation of the viral fusion glycoproteins gB and gH. Targets heparan sulfate proteoglycans of the syndecan family as well as host EPHA2 to promote viral entry. The polypeptide is Envelope glycoprotein L (Human herpesvirus 8 type P (isolate GK18) (HHV-8)).